Reading from the N-terminus, the 1364-residue chain is Outer kinetochore KNL1 complex subunit spc7 (1364 aa).

Residues 1-15 (MPTSPRRNSIATTDN) are compositionally biased toward polar residues. Disordered stretches follow at residues 1-36 (MPTS…GALQ), 124-190 (YPKD…DIAS), and 202-223 (EALN…LSIQ). A compositionally biased stretch (basic and acidic residues) spans 124–136 (YPKDHQSDSEKST). A compositionally biased stretch (polar residues) spans 157 to 169 (GPTTTSFSRNETQ). Low complexity predominate over residues 170 to 181 (SSPHSHSASIIS). The MELT; degenerate motif lies at 254–257 (MDLT). T257 is subject to Phosphothreonine; by mph1. Residues 289 to 334 (ASHDPSNQTQLSSPNKSSSPTSIEISDFSKNNENHDQSENKEEEED) form a disordered region. A compositionally biased stretch (low complexity) spans 300-310 (SSPNKSSSPTS). Basic and acidic residues predominate over residues 318–328 (KNNENHDQSEN). Positions 450-453 (MDLT) match the MELT; degenerate motif. T453 is modified (phosphothreonine; by mph1). Residues 456–503 (ISSTNAPTHLNEDDLNQFTSNISSSSKPRKDNNKTANSSKPIPDSEDF) are disordered. Over residues 471 to 481 (NQFTSNISSSS) the composition is skewed to polar residues. Positions 504-507 (MDIT) match the MELT; degenerate motif. T507 carries the phosphothreonine; by mph1 modification. Disordered stretches follow at residues 564–643 (LPSA…SSFD) and 697–837 (GATP…GVSN). The segment covering 566–585 (SADKENAEREEIPSYSDKSE) has biased composition (basic and acidic residues). Over residues 586–617 (NFNTTSFTNHERSPNGNNNLKFSKDPNSSSPS) the composition is skewed to polar residues. The span at 719 to 730 (EVSRQPTDDKGE) shows a compositional bias: basic and acidic residues. Positions 747 to 773 (LTIQQTNEIKHVPTNTTSSVKLPQQPS) are enriched in polar residues. Residues 791–802 (SLERLESQEPNR) show a composition bias toward basic and acidic residues. The segment covering 808–820 (VGSSNAGNTTSVG) has biased composition (polar residues). Positions 1075–1155 (LAQAQEKLEK…EEQLLNLKNE (81 aa)) form a coiled coil. A Nuclear localization signal motif is present at residues 1091 to 1105 (RRRRLLSEKEERRKE).

Component of the KNL1/SPC105 complex composed of at least spc7 and sos7. Part of the outer kinetochore KMN network that includes the KNL1, MIS12 and NDC80 complexes. Interacts (via C-terminus) with sos7 (via C-terminus); the interaction is direct. Interacts (when phosphorylated on MELT motifs) with bub1 and bub3; to recruit the BUB1-BUB3 complex to the kinetochore. Post-translationally, phosphorylation of threonine residues in the MELT motifs by mph1/mps1 leads to recruitment of bub1 and bub3 to the kinetochore, and is required to maintain spindle assembly checkpoint signaling.

It is found in the nucleus. The protein localises to the chromosome. It localises to the centromere. The protein resides in the kinetochore. Its function is as follows. Acts as a component of the outer kinetochore KNL1 complex that serves as a docking point for spindle assembly checkpoint components and mediates microtubule-kinetochore interactions. Kinetochores, consisting of a centromere-associated inner segment and a microtubule-contacting outer segment, play a crucial role in chromosome segregation by mediating the physical connection between centromeric DNA and spindle microtubules. The outer kinetochore is made up of the ten-subunit KMN network, comprising the MIS12, NDC80 and KNL1 complexes, and auxiliary microtubule-associated components; together they connect the outer kinetochore with the inner kinetochore, bind microtubules, and mediate interactions with mitotic checkpoint proteins that delay anaphase until chromosomes are bioriented on the spindle. Recruits the BUB1-BUB3 complex to kinetochores when phosphorylated by mph1/mps1, to support spindle assembly checkpoint signaling. Functions both in mitotic and in meiotic chromosome segregation. The protein is Outer kinetochore KNL1 complex subunit spc7 of Schizosaccharomyces pombe (strain 972 / ATCC 24843) (Fission yeast).